Reading from the N-terminus, the 152-residue chain is UPF0225 protein YchJ (152 aa).

Belongs to the UPF0225 family.

The protein is UPF0225 protein YchJ of Escherichia coli O139:H28 (strain E24377A / ETEC).